Here is a 610-residue protein sequence, read N- to C-terminus: MPHNNYLYQTRDIKFQIKEWLDINKILSLDAYKDYYGADDFDAICDVNFKICRDVICPANKESDEIGMKHVGGNEKAVISPDVFKTVYNTVIEAGMGPQFGDRQVEGRMPLYWYAPILEMQTGASPAMVMLWCLTQGATTVLQYNLSKELQERFLPKMYSGEWGGSMCLTEPGAGSEVGAVSTKCFPTDTPGLWKVKGQKCFITTGDWDGVDNIIHLVLAKDPDAKPGTAGISCLVVPKFWVNEDGSMGAWNDVTTTGIEHKLGIHGSATCSLAFGENDNCYGWMIGDGPVDGRGQGMAQMFQMMNEERINTGIFSLGAFGAAYYAALEYSKARVQSKKSTDPKGPSVRIIEHEDVRRMLLLQKSVMEACRALLYSSYYYIDMSKEAATEEEREYAEDMFMIQNPLCKAYVSDMAWVMCAEAIQVHGGYGFMEEYAPASLARDCKIYTLWEGTNFIQSQDFTGRKFTMKKGEPFKKWLAEIGDFIANKKTPEFAAEFAMMEKAFAAFNSIIDMNAAWTTTNKQLKQLFATRIMHAAARVICGKLMLDQGLLAAGKLAELGDSHFDANFYKGKLASVKFYVMNVVPEIFGTEEAMKAADTSAIDCPEEAIM.

The Proton acceptor role is filled by glutamate 451.

This sequence belongs to the acyl-CoA dehydrogenase family. FAD is required as a cofactor.

Its subcellular location is the cytoplasm. The enzyme catalyses butanoyl-CoA + oxidized [electron-transfer flavoprotein] + H(+) = (2E)-butenoyl-CoA + reduced [electron-transfer flavoprotein]. The catalysed reaction is a short-chain 2,3-saturated fatty acyl-CoA + oxidized [electron-transfer flavoprotein] + H(+) = a short-chain (2E)-enoyl-CoA + reduced [electron-transfer flavoprotein]. The protein operates within lipid metabolism; butanoate metabolism. In terms of biological role, involved in syntrophic growth of S.wolfei with butyrate, as part of the butyrate oxidation pathway. Catalyzes the oxidation of butanoyl-CoA to crotonyl-CoA. Probably passes the electrons released by this reaction on to electron-transfer flavoproteins (EtfAB) to finally generate hydrogen and/or formate. This is Butyryl-CoA dehydrogenase Swol_2052 from Syntrophomonas wolfei subsp. wolfei (strain DSM 2245B / Goettingen).